The chain runs to 159 residues: Phosphopantetheine adenylyltransferase (159 aa).

Residue Ser-9 coordinates substrate. ATP-binding positions include 9-10 (SF) and His-17. Lys-41, Leu-73, and Lys-87 together coordinate substrate. ATP-binding positions include 88–90 (GLR), Glu-98, and 123–129 (YGYLSSS).

It belongs to the bacterial CoaD family. As to quaternary structure, homohexamer. Requires Mg(2+) as cofactor.

It localises to the cytoplasm. It carries out the reaction (R)-4'-phosphopantetheine + ATP + H(+) = 3'-dephospho-CoA + diphosphate. It participates in cofactor biosynthesis; coenzyme A biosynthesis; CoA from (R)-pantothenate: step 4/5. Reversibly transfers an adenylyl group from ATP to 4'-phosphopantetheine, yielding dephospho-CoA (dPCoA) and pyrophosphate. The sequence is that of Phosphopantetheine adenylyltransferase from Thermoanaerobacter pseudethanolicus (strain ATCC 33223 / 39E) (Clostridium thermohydrosulfuricum).